The sequence spans 696 residues: Methionine--tRNA ligase (696 aa).

The short motif at 12 to 22 is the 'HIGH' region element; that stretch reads PYANGAIHLGH. Zn(2+)-binding residues include Cys-143, Cys-146, Cys-156, and Cys-159. The 'KMSKS' region signature appears at 336–340; it reads KMSKS. Lys-339 is a binding site for ATP. The segment at 556-580 is disordered; that stretch reads SLAPAPEAQSQQRHAEHQQNEVTAE. In terms of domain architecture, tRNA-binding spans 591-696; that stretch reads DFMKVDLRIV…SGAQPGMRVK (106 aa).

Belongs to the class-I aminoacyl-tRNA synthetase family. MetG type 1 subfamily. In terms of assembly, homodimer. Zn(2+) serves as cofactor.

It is found in the cytoplasm. The catalysed reaction is tRNA(Met) + L-methionine + ATP = L-methionyl-tRNA(Met) + AMP + diphosphate. Is required not only for elongation of protein synthesis but also for the initiation of all mRNA translation through initiator tRNA(fMet) aminoacylation. This is Methionine--tRNA ligase from Dechloromonas aromatica (strain RCB).